The following is a 238-amino-acid chain: MSQSLIVALDFPGKQDVEQFLRHFEGEELFVKVGMELFYKEGPAIITYLKEKGHKIFLDLKLHDIPNTVKSAMRSLASLDVDMVNVHAAGGSSMMKAAIEGLEEGKQEGKERPICIAVTQLTSTSETMMKKEIGIEKTLEEAVAHYAKLTKESGLDGVVCSTLEVPKLREVCGNEFVTVTPGIRLASDDVNDQVRVATPKRARELGSSYIVVGRSITKAENPLEAYKTVKQQWEGVTV.

Substrate-binding positions include D10, K32, 59–68 (DLKLHDIPNT), T122, R184, Q193, G213, and R214. The active-site Proton donor is K61.

The protein belongs to the OMP decarboxylase family. Type 1 subfamily. As to quaternary structure, homodimer.

The enzyme catalyses orotidine 5'-phosphate + H(+) = UMP + CO2. It functions in the pathway pyrimidine metabolism; UMP biosynthesis via de novo pathway; UMP from orotate: step 2/2. In terms of biological role, catalyzes the decarboxylation of orotidine 5'-monophosphate (OMP) to uridine 5'-monophosphate (UMP). The protein is Orotidine 5'-phosphate decarboxylase of Bacillus thuringiensis subsp. konkukian (strain 97-27).